The following is a 639-amino-acid chain: Threonine--tRNA ligase (639 aa).

Residues 1 to 61 enclose the TGS domain; sequence MIRITLPDNS…DHDARLQIIT (61 aa). A catalytic region spans residues 242 to 533; that stretch reads DHRRLGRELD…LIEQHAGALP (292 aa). Positions 333, 384, and 510 each coordinate Zn(2+).

It belongs to the class-II aminoacyl-tRNA synthetase family. In terms of assembly, homodimer. Zn(2+) serves as cofactor.

It is found in the cytoplasm. It catalyses the reaction tRNA(Thr) + L-threonine + ATP = L-threonyl-tRNA(Thr) + AMP + diphosphate + H(+). Functionally, catalyzes the attachment of threonine to tRNA(Thr) in a two-step reaction: L-threonine is first activated by ATP to form Thr-AMP and then transferred to the acceptor end of tRNA(Thr). Also edits incorrectly charged L-seryl-tRNA(Thr). In Paracidovorax citrulli (strain AAC00-1) (Acidovorax citrulli), this protein is Threonine--tRNA ligase.